We begin with the raw amino-acid sequence, 421 residues long: NAD-specific glutamate dehydrogenase (421 aa).

Substrate-binding residues include K71 and K95. K107 (proton donor) is an active-site residue. Residues T191 and N222 each contribute to the NAD(+) site. S355 is a substrate binding site.

This sequence belongs to the Glu/Leu/Phe/Val dehydrogenases family. Homohexamer.

The catalysed reaction is L-glutamate + NAD(+) + H2O = 2-oxoglutarate + NH4(+) + NADH + H(+). This is NAD-specific glutamate dehydrogenase (gluD) from Clostridioides difficile (Peptoclostridium difficile).